Here is a 137-residue protein sequence, read N- to C-terminus: NADH-quinone oxidoreductase subunit A (137 aa).

Transmembrane regions (helical) follow at residues 12–32 (WGFA…LGLS), 66–86 (FYLV…LFAW), and 95–115 (WTGF…LVYL).

Belongs to the complex I subunit 3 family. As to quaternary structure, NDH-1 is composed of 13 different subunits. Subunits NuoA, H, J, K, L, M, N constitute the membrane sector of the complex.

It localises to the cell inner membrane. It catalyses the reaction a quinone + NADH + 5 H(+)(in) = a quinol + NAD(+) + 4 H(+)(out). In terms of biological role, NDH-1 shuttles electrons from NADH, via FMN and iron-sulfur (Fe-S) centers, to quinones in the respiratory chain. The immediate electron acceptor for the enzyme in this species is believed to be ubiquinone. Couples the redox reaction to proton translocation (for every two electrons transferred, four hydrogen ions are translocated across the cytoplasmic membrane), and thus conserves the redox energy in a proton gradient. This Pseudomonas savastanoi pv. phaseolicola (strain 1448A / Race 6) (Pseudomonas syringae pv. phaseolicola (strain 1448A / Race 6)) protein is NADH-quinone oxidoreductase subunit A.